A 184-amino-acid polypeptide reads, in one-letter code: Elongation factor P (184 aa).

This sequence belongs to the elongation factor P family.

It is found in the cytoplasm. Its pathway is protein biosynthesis; polypeptide chain elongation. In terms of biological role, involved in peptide bond synthesis. Stimulates efficient translation and peptide-bond synthesis on native or reconstituted 70S ribosomes in vitro. Probably functions indirectly by altering the affinity of the ribosome for aminoacyl-tRNA, thus increasing their reactivity as acceptors for peptidyl transferase. This chain is Elongation factor P, found in Polaromonas naphthalenivorans (strain CJ2).